Here is a 326-residue protein sequence, read N- to C-terminus: tRNA-modifying protein YgfZ (326 aa).

Residues Trp-27 and Trp-189 each coordinate folate.

The protein belongs to the tRNA-modifying YgfZ family.

The protein localises to the cytoplasm. Functionally, folate-binding protein involved in regulating the level of ATP-DnaA and in the modification of some tRNAs. It is probably a key factor in regulatory networks that act via tRNA modification, such as initiation of chromosomal replication. The polypeptide is tRNA-modifying protein YgfZ (Salmonella arizonae (strain ATCC BAA-731 / CDC346-86 / RSK2980)).